Reading from the N-terminus, the 306-residue chain is Immune protein Tsi7 (306 aa).

In terms of assembly, interacts with Tse7.

Its function is as follows. Immunity protein that plays a role in preventing early activation of toxin Tse7. Protects thereby cells from Tse7 DNase activity. The chain is Immune protein Tsi7 from Pseudomonas aeruginosa (strain ATCC 15692 / DSM 22644 / CIP 104116 / JCM 14847 / LMG 12228 / 1C / PRS 101 / PAO1).